A 397-amino-acid chain; its full sequence is Autophagy-related protein 29 (397 aa).

The segment at 71–397 is disordered; it reads ATAAVRNSGP…RSRYTSSSNQ (327 aa). Acidic residues predominate over residues 230–240; that stretch reads QYEDDDDDESE. Polar residues predominate over residues 245–259; sequence PYTSPSSKTSAQDLG. Positions 269 to 282 are enriched in basic residues; sequence SGKRPHKSHGKPAI. Composition is skewed to basic and acidic residues over residues 300–309 and 330–341; these read KPDKTDRSTE and GGKDKGYSREGS. 2 stretches are compositionally biased toward polar residues: residues 343–363 and 381–397; these read GTPS…TQSA and FSIS…SSNQ.

Belongs to the ATG29 family. As to quaternary structure, forms a stable complex with ATG17 and ATG31. Interacts directly with ATG31. The ATG17-ATG29-ATG31 complex interacts with the ATG1-ATG13 complex. Note=The interaction with the ATG1-ATG13 complex is induced by starvation.

It localises to the preautophagosomal structure. In terms of biological role, plays a role in autophagy. Functions at the preautophagosomal structure (PAS) in order to form normal autophagosomes under starvation conditions. Also plays a role in mitophagy. Autophagy is required for proper vegetative growth, asexual/sexual reproduction, and full virulence. Autophagy is particularly involved in the biosynthesis of deoxynivalenol (DON), an important virulence determinant. The sequence is that of Autophagy-related protein 29 from Gibberella zeae (strain ATCC MYA-4620 / CBS 123657 / FGSC 9075 / NRRL 31084 / PH-1) (Wheat head blight fungus).